A 97-amino-acid chain; its full sequence is MAKEQTDRTTLDLFAHERRPGRPKTNPLSRDEQLRINKRNQLKRDKVRGLKRVELKLNAEAVEALNELAESRNMSRSELIEEMLMQQLAALRSQGIV.

A compositionally biased stretch (basic and acidic residues) spans 1-20 (MAKEQTDRTTLDLFAHERRP). The interval 1-30 (MAKEQTDRTTLDLFAHERRPGRPKTNPLSR) is disordered.

This is an uncharacterized protein from Escherichia coli O157:H7.